The primary structure comprises 1038 residues: Elongation factor 3 (1038 aa).

HEAT repeat units follow at residues 93-131 (EAYL…SANK), 133-170 (STIR…VAPY), 174-211 (RCLP…VVGN), 213-249 (DIEP…TVEA), 255-287 (MEPL…LMDD), and 292-331 (QLFI…AGGS). E406 is a binding site for ADP. ABC transporter domains lie at 426-654 (IFIE…YYEL) and 680-995 (IRLT…EEVT). ADP contacts are provided by N716, E924, N927, and H953. Positions 1012–1038 (RKEKKAKDKARKEAEARGEYYSDSDEE) are disordered. Residues 1021-1031 (ARKEAEARGEY) show a composition bias toward basic and acidic residues.

The protein belongs to the ABC transporter superfamily. ABCF family. EF3 subfamily. Monomer.

The protein localises to the cytoplasm. The catalysed reaction is ATP + H2O = ADP + phosphate + H(+). It functions in the pathway protein biosynthesis; polypeptide chain elongation. Functionally, ribosome-dependent ATPase that functions in cytoplasmic translation elongation. Required for the ATP-dependent release of deacylated tRNA from the ribosomal E-site during protein biosynthesis. Stimulates the eEF1A-dependent binding of aminoacyl-tRNA to the ribosomal A-site, which has reduced affinity for tRNA as long as the E-site is occupied. Assists translation termination by stimulating the release of nascent protein from the ribosome by release factors. The sequence is that of Elongation factor 3 from Phytophthora infestans (strain T30-4) (Potato late blight agent).